Here is a 301-residue protein sequence, read N- to C-terminus: tRNA dimethylallyltransferase 1 (301 aa).

An ATP-binding site is contributed by 10-17; the sequence is GPTASGKT. Residue 12-17 participates in substrate binding; that stretch reads TASGKT. An interaction with substrate tRNA region spans residues 35-38; that stretch reads DSRQ.

It belongs to the IPP transferase family. Monomer. Mg(2+) is required as a cofactor.

It carries out the reaction adenosine(37) in tRNA + dimethylallyl diphosphate = N(6)-dimethylallyladenosine(37) in tRNA + diphosphate. Catalyzes the transfer of a dimethylallyl group onto the adenine at position 37 in tRNAs that read codons beginning with uridine, leading to the formation of N6-(dimethylallyl)adenosine (i(6)A). The polypeptide is tRNA dimethylallyltransferase 1 (Geotalea uraniireducens (strain Rf4) (Geobacter uraniireducens)).